Reading from the N-terminus, the 169-residue chain is Peptide deformylase (169 aa).

Positions 91 and 133 each coordinate Fe cation. E134 is a catalytic residue. H137 contacts Fe cation.

This sequence belongs to the polypeptide deformylase family. Requires Fe(2+) as cofactor.

The enzyme catalyses N-terminal N-formyl-L-methionyl-[peptide] + H2O = N-terminal L-methionyl-[peptide] + formate. In terms of biological role, removes the formyl group from the N-terminal Met of newly synthesized proteins. Requires at least a dipeptide for an efficient rate of reaction. N-terminal L-methionine is a prerequisite for activity but the enzyme has broad specificity at other positions. This Salmonella arizonae (strain ATCC BAA-731 / CDC346-86 / RSK2980) protein is Peptide deformylase.